Consider the following 532-residue polypeptide: 2,3-bisphosphoglycerate-independent phosphoglycerate mutase (532 aa).

Mn(2+) contacts are provided by aspartate 15 and serine 65. Catalysis depends on serine 65, which acts as the Phosphoserine intermediate. Substrate-binding positions include histidine 126, 156–157, arginine 188, arginine 194, 258–261, and lysine 331; these read RD and RPDR. Mn(2+)-binding residues include aspartate 398, histidine 402, aspartate 439, histidine 440, and histidine 457.

This sequence belongs to the BPG-independent phosphoglycerate mutase family. Monomer. Mn(2+) is required as a cofactor.

It catalyses the reaction (2R)-2-phosphoglycerate = (2R)-3-phosphoglycerate. The protein operates within carbohydrate degradation; glycolysis; pyruvate from D-glyceraldehyde 3-phosphate: step 3/5. Its function is as follows. Catalyzes the interconversion of 2-phosphoglycerate and 3-phosphoglycerate. This is 2,3-bisphosphoglycerate-independent phosphoglycerate mutase from Trichodesmium erythraeum (strain IMS101).